Here is a 374-residue protein sequence, read N- to C-terminus: MSKRDYYEVLGVSKDVSPQELKKAYRKVAMKYHPDRNSDDPNSEDKFKEASEAYEVLSDAQKRAAYDQYGHAGVDGNAGMGGGAGAGNFSDIFGDVFGDIFGGGGGRRRGGPSRGSDLRYTLDLSLEDAVKGTTVKIRVPTLVSCKPCGGSGAKPGTSPQTCTTCGGHGQVRMQQGFFSVQQTCPNCRGQGKMITDPCKECHGHGRVEETKTLSVKVPPGVDTGDRIRLAGEGEAGADGGPAGDLYVQVDVQDHAFFQREGRNLYCEVPISLFDACLGGELEVPTLDGRVKLKIPAETQTGKLFRLRGKGVTPVRGGAAGDLMCRVIIETPVNLTKKQKELLEELKASMKGEKNSPKQESWFEGMKNFFGDLKM.

The 66-residue stretch at 5 to 70 (DYYEVLGVSK…QKRAAYDQYG (66 aa)) folds into the J domain. Residues 132–210 (GTTVKIRVPT…CHGHGRVEET (79 aa)) form a CR-type zinc finger. C145, C148, C162, C165, C184, C187, C198, and C201 together coordinate Zn(2+). CXXCXGXG motif repeat units lie at residues 145 to 152 (CKPCGGSG), 162 to 169 (CTTCGGHG), 184 to 191 (CPNCRGQG), and 198 to 205 (CKECHGHG).

This sequence belongs to the DnaJ family. In terms of assembly, homodimer. It depends on Zn(2+) as a cofactor.

It is found in the cytoplasm. Participates actively in the response to hyperosmotic and heat shock by preventing the aggregation of stress-denatured proteins and by disaggregating proteins, also in an autonomous, DnaK-independent fashion. Unfolded proteins bind initially to DnaJ; upon interaction with the DnaJ-bound protein, DnaK hydrolyzes its bound ATP, resulting in the formation of a stable complex. GrpE releases ADP from DnaK; ATP binding to DnaK triggers the release of the substrate protein, thus completing the reaction cycle. Several rounds of ATP-dependent interactions between DnaJ, DnaK and GrpE are required for fully efficient folding. Also involved, together with DnaK and GrpE, in the DNA replication of plasmids through activation of initiation proteins. This Saccharophagus degradans (strain 2-40 / ATCC 43961 / DSM 17024) protein is Chaperone protein DnaJ.